The chain runs to 311 residues: 4-hydroxy-tetrahydrodipicolinate synthase (311 aa).

Thr-51 is a pyruvate binding site. Tyr-140 (proton donor/acceptor) is an active-site residue. Residue Lys-168 is the Schiff-base intermediate with substrate of the active site. Residue Ile-209 coordinates pyruvate.

Belongs to the DapA family. Homotetramer; dimer of dimers.

It localises to the cytoplasm. The catalysed reaction is L-aspartate 4-semialdehyde + pyruvate = (2S,4S)-4-hydroxy-2,3,4,5-tetrahydrodipicolinate + H2O + H(+). It participates in amino-acid biosynthesis; L-lysine biosynthesis via DAP pathway; (S)-tetrahydrodipicolinate from L-aspartate: step 3/4. In terms of biological role, catalyzes the condensation of (S)-aspartate-beta-semialdehyde [(S)-ASA] and pyruvate to 4-hydroxy-tetrahydrodipicolinate (HTPA). The protein is 4-hydroxy-tetrahydrodipicolinate synthase of Streptococcus pneumoniae (strain ATCC 700669 / Spain 23F-1).